The sequence spans 370 residues: MDLTWVTEGRTTIAVPCQNPDVPFPPGTAPVFYNSRMALNRDSTVLVVRQTHPHSYLDAMAASGIRGCRVGYETGVPVTFNDRDQLAIDLITHNVQSLGIKADITCRDANSLMSDEKFGFVDLDPFGTPAPFIDAAIRSSGKYLGVTATDTAPLCGAHLKAGIRRYMARPLNTEYHTEVGLRILLGNVARHAAVYDKGITPLFCYAHEHFVRLHLQLKSSASAADKSIARLGYIHQCPKCPYRLEEQKFFPGIHTCPLCGASLTPTGPLWTGSTHDPNILAGMIEDAETFIAGDPSGLLKLLALCRDEPDISFSYDYHKLGKFYRLSPGPIDVLLNRLRDKGYRAGRVHYSGYGIKTDAPLEEIRDCISS.

The region spanning 4-368 (TWVTEGRTTI…APLEEIRDCI (365 aa)) is the Trm1 methyltransferase domain. Arg-41, Arg-66, Asp-82, Asp-108, and Ala-109 together coordinate S-adenosyl-L-methionine. Zn(2+) contacts are provided by Cys-237, Cys-240, Cys-256, and Cys-259.

It belongs to the class I-like SAM-binding methyltransferase superfamily. Trm1 family.

The enzyme catalyses guanosine(26) in tRNA + 2 S-adenosyl-L-methionine = N(2)-dimethylguanosine(26) in tRNA + 2 S-adenosyl-L-homocysteine + 2 H(+). In terms of biological role, dimethylates a single guanine residue at position 26 of a number of tRNAs using S-adenosyl-L-methionine as donor of the methyl groups. This Methanospirillum hungatei JF-1 (strain ATCC 27890 / DSM 864 / NBRC 100397 / JF-1) protein is tRNA (guanine(26)-N(2))-dimethyltransferase.